We begin with the raw amino-acid sequence, 829 residues long: Periplasmic nitrate reductase (829 aa).

A signal peptide (tat-type signal) is located at residues 1 to 30; it reads MKMTRRAFVKANAAASAAAVAGITLPASAA. Residues 41–97 form the 4Fe-4S Mo/W bis-MGD-type domain; that stretch reads ITWDKAPCRFCGTGCSVLVGTQNGKVVATQGDPEAPVNKGLNCIKGYFLSKIMYGQD. [4Fe-4S] cluster contacts are provided by Cys48, Cys51, Cys55, and Cys83. Mo-bis(molybdopterin guanine dinucleotide) is bound by residues Lys85, Gln152, Asn177, Cys181, 214 to 221, 245 to 249, 264 to 266, Met374, Gln378, Asn484, 510 to 511, Lys533, Asp560, and 718 to 727; these read WGSNMAEM, STYYH, QSD, SD, and TGRVLEHWHT. Phe794 lines the substrate pocket. Positions 802 and 819 each coordinate Mo-bis(molybdopterin guanine dinucleotide).

It belongs to the prokaryotic molybdopterin-containing oxidoreductase family. NasA/NapA/NarB subfamily. In terms of assembly, component of the periplasmic nitrate reductase NapAB complex composed of NapA and NapB. It depends on [4Fe-4S] cluster as a cofactor. Mo-bis(molybdopterin guanine dinucleotide) serves as cofactor. Post-translationally, predicted to be exported by the Tat system. The position of the signal peptide cleavage has not been experimentally proven.

It localises to the periplasm. The catalysed reaction is 2 Fe(II)-[cytochrome] + nitrate + 2 H(+) = 2 Fe(III)-[cytochrome] + nitrite + H2O. Functionally, catalytic subunit of the periplasmic nitrate reductase complex NapAB. Receives electrons from NapB and catalyzes the reduction of nitrate to nitrite. In Vibrio vulnificus (strain CMCP6), this protein is Periplasmic nitrate reductase.